Consider the following 119-residue polypeptide: MTKEQIIEAVKSMTVLELNDLVKAIEEEFGVTAAAPVAVAGGAGEAAAEKTEFDVELTSAGAQKIKVIKVVREITGLGLKEAKELVDNTPKVIKEAAAKEEAEEIKAKLEEVGAAVEVK.

It belongs to the bacterial ribosomal protein bL12 family. Homodimer. Part of the ribosomal stalk of the 50S ribosomal subunit. Forms a multimeric L10(L12)X complex, where L10 forms an elongated spine to which 2 to 4 L12 dimers bind in a sequential fashion. Binds GTP-bound translation factors.

In terms of biological role, forms part of the ribosomal stalk which helps the ribosome interact with GTP-bound translation factors. Is thus essential for accurate translation. The chain is Large ribosomal subunit protein bL12 from Bacillus anthracis (strain A0248).